We begin with the raw amino-acid sequence, 433 residues long: GTPase Obg (433 aa).

Residues 1–159 (MAITDYCECR…LNVSLEVKYL (159 aa)) enclose the Obg domain. An OBG-type G domain is found at 160-329 (ANVGIVGFPN…LLDRVFELYN (170 aa)). GTP contacts are provided by residues 166–173 (GFPNSGKS), 191–195 (FTTLI), 212–215 (DIPG), 282–285 (NKID), and 310–312 (ISA). Mg(2+)-binding residues include serine 173 and threonine 193. An OCT domain is found at 355 to 433 (TNENNNDPLN…FDGCEFVIND (79 aa)).

Belongs to the TRAFAC class OBG-HflX-like GTPase superfamily. OBG GTPase family. Monomer. The cofactor is Mg(2+).

It is found in the cytoplasm. Functionally, an essential GTPase which binds GTP, GDP and possibly (p)ppGpp with moderate affinity, with high nucleotide exchange rates and a fairly low GTP hydrolysis rate. Plays a role in control of the cell cycle, stress response, ribosome biogenesis and in those bacteria that undergo differentiation, in morphogenesis control. The protein is GTPase Obg of Mycoplasma genitalium (strain ATCC 33530 / DSM 19775 / NCTC 10195 / G37) (Mycoplasmoides genitalium).